The following is a 718-amino-acid chain: Kelch-like protein 4 (718 aa).

The tract at residues 46-69 is disordered; that stretch reads TPVQGRLKSHSRDRNGLKKSNSPV. The BTB domain maps to 182–249; it reads CDVLLIAGHL…AYTGVLQLKE (68 aa). Kelch repeat units lie at residues 430 to 476, 477 to 523, 525 to 570, 571 to 617, 619 to 670, and 671 to 717; these read ALYA…VIDN, KLYV…TLEG, MYAV…ALNN, KLYA…TYNG, LYVV…PLGD, and KLYV…VVKL.

In terms of tissue distribution, expressed in adult fibroblasts and in a range of fetal tissues including tongue, palate, and mandible.

The protein localises to the cytoplasm. It localises to the cytoskeleton. In Homo sapiens (Human), this protein is Kelch-like protein 4 (KLHL4).